The sequence spans 93 residues: Small ribosomal subunit protein uS19 (93 aa).

It belongs to the universal ribosomal protein uS19 family.

Its function is as follows. Protein S19 forms a complex with S13 that binds strongly to the 16S ribosomal RNA. This chain is Small ribosomal subunit protein uS19, found in Ruminiclostridium cellulolyticum (strain ATCC 35319 / DSM 5812 / JCM 6584 / H10) (Clostridium cellulolyticum).